The primary structure comprises 226 residues: 7-cyano-7-deazaguanine synthase (226 aa).

10–20 is an ATP binding site; the sequence is LSGGLDSATAA. Residues Cys191, Cys199, Cys202, and Cys205 each contribute to the Zn(2+) site.

Belongs to the QueC family. Zn(2+) serves as cofactor.

It carries out the reaction 7-carboxy-7-deazaguanine + NH4(+) + ATP = 7-cyano-7-deazaguanine + ADP + phosphate + H2O + H(+). It functions in the pathway purine metabolism; 7-cyano-7-deazaguanine biosynthesis. In terms of biological role, catalyzes the ATP-dependent conversion of 7-carboxy-7-deazaguanine (CDG) to 7-cyano-7-deazaguanine (preQ(0)). The protein is 7-cyano-7-deazaguanine synthase of Synechococcus sp. (strain CC9605).